Reading from the N-terminus, the 504-residue chain is ATP synthase subunit alpha, chloroplastic (504 aa).

170–177 (GDRQTGKT) contributes to the ATP binding site.

The protein belongs to the ATPase alpha/beta chains family. As to quaternary structure, F-type ATPases have 2 components, CF(1) - the catalytic core - and CF(0) - the membrane proton channel. CF(1) has five subunits: alpha(3), beta(3), gamma(1), delta(1), epsilon(1). CF(0) has four main subunits: a, b, b' and c.

Its subcellular location is the plastid. It is found in the chloroplast thylakoid membrane. It carries out the reaction ATP + H2O + 4 H(+)(in) = ADP + phosphate + 5 H(+)(out). Its function is as follows. Produces ATP from ADP in the presence of a proton gradient across the membrane. The alpha chain is a regulatory subunit. The protein is ATP synthase subunit alpha, chloroplastic of Triticum aestivum (Wheat).